Reading from the N-terminus, the 122-residue chain is MIQQESRMKVADNSGAREVLTIKVLGGSGRKTANIGDVVVCTVKQATPGGVVKKGEVVKAVIVRTKSGARRQDGSYIKFDENACVIIRDDKSPRGTRIFGPVARELRENNFMKIVSLAPEVL.

It belongs to the universal ribosomal protein uL14 family. Part of the 50S ribosomal subunit. Forms a cluster with proteins L3 and L19. In the 70S ribosome, L14 and L19 interact and together make contacts with the 16S rRNA in bridges B5 and B8.

Functionally, binds to 23S rRNA. Forms part of two intersubunit bridges in the 70S ribosome. In Listeria monocytogenes serotype 4b (strain CLIP80459), this protein is Large ribosomal subunit protein uL14.